The following is a 59-amino-acid chain: Large ribosomal subunit protein uL30 (59 aa).

Belongs to the universal ribosomal protein uL30 family. In terms of assembly, part of the 50S ribosomal subunit.

The protein is Large ribosomal subunit protein uL30 of Rhodococcus erythropolis (strain PR4 / NBRC 100887).